A 237-amino-acid polypeptide reads, in one-letter code: Small ribosomal subunit protein uS17m (237 aa).

This sequence belongs to the universal ribosomal protein uS17 family. As to quaternary structure, component of the mitochondrial small ribosomal subunit (mt-SSU). Mature yeast 74S mitochondrial ribosomes consist of a small (37S) and a large (54S) subunit. The 37S small subunit contains a 15S ribosomal RNA (15S mt-rRNA) and 34 different proteins. The 54S large subunit contains a 21S rRNA (21S mt-rRNA) and 46 different proteins.

The protein localises to the mitochondrion. In terms of biological role, component of the mitochondrial ribosome (mitoribosome), a dedicated translation machinery responsible for the synthesis of mitochondrial genome-encoded proteins, including at least some of the essential transmembrane subunits of the mitochondrial respiratory chain. The mitoribosomes are attached to the mitochondrial inner membrane and translation products are cotranslationally integrated into the membrane. uS17m may have a meiosis-specific role as it accumulates during the middle stage of sporulation. In Saccharomyces cerevisiae (strain ATCC 204508 / S288c) (Baker's yeast), this protein is Small ribosomal subunit protein uS17m (MRPS17).